Here is a 178-residue protein sequence, read N- to C-terminus: Ribosome maturation factor RimM (178 aa).

A PRC barrel domain is found at Ala-101–Phe-178.

It belongs to the RimM family. In terms of assembly, binds ribosomal protein uS19.

It localises to the cytoplasm. An accessory protein needed during the final step in the assembly of 30S ribosomal subunit, possibly for assembly of the head region. Essential for efficient processing of 16S rRNA. May be needed both before and after RbfA during the maturation of 16S rRNA. It has affinity for free ribosomal 30S subunits but not for 70S ribosomes. This Pseudomonas putida (strain ATCC 47054 / DSM 6125 / CFBP 8728 / NCIMB 11950 / KT2440) protein is Ribosome maturation factor RimM.